Reading from the N-terminus, the 416-residue chain is Adenosylhomocysteinase (416 aa).

Positions 55, 126, and 151 each coordinate substrate. An NAD(+)-binding site is contributed by 152–154; the sequence is TTT. 2 residues coordinate substrate: K181 and D185. NAD(+) contacts are provided by residues N186, 215 to 220, E238, N273, 294 to 296, and N341; these read GYGWVG and AGH.

This sequence belongs to the adenosylhomocysteinase family. The cofactor is NAD(+).

It localises to the cytoplasm. The enzyme catalyses S-adenosyl-L-homocysteine + H2O = L-homocysteine + adenosine. Its pathway is amino-acid biosynthesis; L-homocysteine biosynthesis; L-homocysteine from S-adenosyl-L-homocysteine: step 1/1. In terms of biological role, may play a key role in the regulation of the intracellular concentration of adenosylhomocysteine. The chain is Adenosylhomocysteinase from Aeropyrum pernix (strain ATCC 700893 / DSM 11879 / JCM 9820 / NBRC 100138 / K1).